A 428-amino-acid polypeptide reads, in one-letter code: Trigger factor (428 aa).

The PPIase FKBP-type domain maps to 163-248 (GDTAIIDFEG…INDVKVKELS (86 aa)).

This sequence belongs to the FKBP-type PPIase family. Tig subfamily.

Its subcellular location is the cytoplasm. It catalyses the reaction [protein]-peptidylproline (omega=180) = [protein]-peptidylproline (omega=0). Functionally, involved in protein export. Acts as a chaperone by maintaining the newly synthesized protein in an open conformation. Functions as a peptidyl-prolyl cis-trans isomerase. This is Trigger factor from Clostridioides difficile (strain 630) (Peptoclostridium difficile).